The primary structure comprises 156 residues: Small ribosomal subunit protein uS15 (156 aa).

The disordered stretch occupies residues 1–67; it reads MARMHTRRRG…GVQGTPIPDV (67 aa). The segment covering 10–19 has biased composition (basic and acidic residues); sequence GSSDSDKPAA. A compositionally biased stretch (acidic residues) spans 21–32; sequence EPPEWSDVDEDA.

It belongs to the universal ribosomal protein uS15 family. As to quaternary structure, part of the 30S ribosomal subunit.

The sequence is that of Small ribosomal subunit protein uS15 from Haloarcula marismortui (strain ATCC 43049 / DSM 3752 / JCM 8966 / VKM B-1809) (Halobacterium marismortui).